We begin with the raw amino-acid sequence, 329 residues long: MTNRKDDHIKYALKYQSPYNAFDDIELIHHSLPSYDLSDIDLSTHFAGQDFDFPFYINAMTGGSQKGKAVNEKLAKVAAATGIVMVTGSYSAALKNPNDDSYRLHEVADNLKLATNIGLDKPVALGQQTVQEMQPLFLQVHVNVMQELLMPEGERVFHTWKKHLAEYASQIPVPVILKEVGFGMDVNSIKLAHDLGIQTFDISGRGGTSFAYIENQRGGDRSYLNDWGQTTVQCLLNAQGLMDQVEILASGGVRHPLDMIKCFVLGARAVGLSRTVLELVEKYPTERVIAIVNGWKEELKIIMCALDCKTIKELKGVDYLLYGRLQQVN.

Position 4-5 (Arg4–Lys5) interacts with substrate. FMN is bound by residues Ala59–Thr61, Ser89, and Asn116. Gln146 contributes to the substrate binding site. Position 147 (Glu147) interacts with Mg(2+). Residues Lys178, Ser203, Thr208, Gly252–Arg254, and Ser273–Arg274 each bind FMN.

This sequence belongs to the IPP isomerase type 2 family. In terms of assembly, homooctamer. Dimer of tetramers. FMN serves as cofactor. NADPH is required as a cofactor. The cofactor is Mg(2+).

Its subcellular location is the cytoplasm. It catalyses the reaction isopentenyl diphosphate = dimethylallyl diphosphate. Its function is as follows. Involved in the biosynthesis of isoprenoids. Catalyzes the 1,3-allylic rearrangement of the homoallylic substrate isopentenyl (IPP) to its allylic isomer, dimethylallyl diphosphate (DMAPP). This Streptococcus pyogenes serotype M28 (strain MGAS6180) protein is Isopentenyl-diphosphate delta-isomerase.